A 442-amino-acid polypeptide reads, in one-letter code: Protein IQ-DOMAIN 33 (442 aa).

One can recognise an IQ domain in the interval 159 to 188 (EEDAAVIIQSAFRSYLAIRRSKEEEETFAK). The interval 184-212 (ETFAKEESFSGEESQDNASMGTSLEAQTG) is disordered. The span at 199-212 (DNASMGTSLEAQTG) shows a compositional bias: polar residues. Residues 270–282 (RERALAYAFSQQL) are calmodulin-binding. The disordered stretch occupies residues 375–442 (EKSSFKPSIS…ETSHKLNSST (68 aa)). Basic residues predominate over residues 383–402 (ISKRKSVPSYKSQRKHHKLQ). A Nuclear localization signal motif is present at residues 385 to 392 (KRKSVPSY).

Belongs to the IQD family. As to quaternary structure, binds to multiple calmodulin (CaM) in the presence of Ca(2+) and CaM-like proteins.

Its subcellular location is the nucleus. Its function is as follows. May be involved in cooperative interactions with calmodulins or calmodulin-like proteins. Recruits calmodulin proteins to microtubules, thus being a potential scaffold in cellular signaling and trafficking. May associate with nucleic acids and regulate gene expression at the transcriptional or post-transcriptional level. This chain is Protein IQ-DOMAIN 33, found in Arabidopsis thaliana (Mouse-ear cress).